A 1486-amino-acid chain; its full sequence is Rap guanine nucleotide exchange factor 2 (1486 aa).

Disordered regions lie at residues 40-59 (HVSS…SSSL) and 68-101 (SEAG…SDPL). Residues 83–94 (VDSEDDDDEEDI) are compositionally biased toward acidic residues. A nucleoside 3',5'-cyclic phosphate is bound at residue 135 to 252 (AFANMTMSVR…QKVEEEGEIV (118 aa)). The 114-residue stretch at 267–380 (KGHIVIKGTS…RLLNIACAAK (114 aa)) folds into the N-terminal Ras-GEF domain. The region spanning 385-468 (LMTLTKPARE…LSITVKTNLF (84 aa)) is the PDZ domain. Position 501 is a phosphoserine (Ser-501). One can recognise a Ras-associating domain in the interval 606–692 (PDQVLRVFKA…GRYYLKNNME (87 aa)). Residue Thr-644 is modified to Phosphothreonine. The Ras-GEF domain maps to 717-944 (STVEVATQLS…SQGSTNATVL (228 aa)). Phosphoserine occurs at positions 806, 930, 933, and 1022. A disordered region spans residues 1002–1049 (PATNTLPKNPTDKKPVKSETSPVAPRAGLQPKAQPQPQPPQPPHKLNQ). A compositionally biased stretch (pro residues) spans 1035–1044 (QPQPQPPQPP). Phosphoserine is present on residues Ser-1077, Ser-1086, Ser-1092, Ser-1113, Ser-1117, Ser-1156, and Ser-1173. 4 disordered regions span residues 1090-1176 (EGSL…SVSI), 1221-1254 (PSTE…SGSH), 1303-1357 (KYSR…DSSS), and 1391-1486 (GRYR…VSAV). Low complexity-rich tracts occupy residues 1105 to 1122 (SNTS…QSSP) and 1138 to 1159 (SDSG…SFDS). Composition is skewed to polar residues over residues 1244–1254 (GSWTSCSSGSH) and 1304–1328 (YSRQ…SSTG). A compositionally biased stretch (acidic residues) spans 1475-1486 (AEEDEDEQVSAV).

Belongs to the RAPGEF2 family. As to quaternary structure, found in a complex, at least composed of KIDINS220, MAGI2, NTRK1 and RAPGEF2; the complex is mainly formed at late endosomes in a neuronal growth factor (NGF)-dependent manner. Interacts (via C-terminal domain) with NEDD4 (via WW domains); this interaction leads to ubiquitination and degradation via the proteasome pathway in a cAMP-independent manner. Interacts with MAGI1 (via PDZ domain). Interacts with ADRB1 (via C-terminal PDZ motif); the interaction is direct. Interacts (via Ras-associating domain) with RAP1A (via GTP-bound active form). Interacts weakly with HRAS (via GDP- and GTP-bound forms). Interacts (via C-terminal domain) with MAGI2 (via PDZ and WW domains). Interacts with CDH1 and TJP1. Interacts with CTNNB1. Ubiquitinated by NEDD4, leading to proteasomal degradation. Post-translationally, phosphorylation by PLK2 promotes its activity.

The protein resides in the cytoplasm. The protein localises to the perinuclear region. It is found in the cell membrane. Its subcellular location is the late endosome. It localises to the cell junction. Functionally, functions as a guanine nucleotide exchange factor (GEF), which activates Rap and Ras family of small GTPases by exchanging bound GDP for free GTP in a cAMP-dependent manner. Serves as a link between cell surface receptors and Rap/Ras GTPases in intracellular signaling cascades. Also acts as an effector for Rap1 by direct association with Rap1-GTP thereby leading to the amplification of Rap1-mediated signaling. Shows weak activity on HRAS. It is controversial whether RAPGEF2 binds cAMP and cGMP or not. Its binding to ligand-activated beta-1 adrenergic receptor ADRB1 leads to the Ras activation through the G(s)-alpha signaling pathway. Involved in the cAMP-induced Ras and Erk1/2 signaling pathway that leads to sustained inhibition of long term melanogenesis by reducing dendrite extension and melanin synthesis. Also provides inhibitory signals for cell proliferation of melanoma cells and promotes their apoptosis in a cAMP-independent nanner. Regulates cAMP-induced neuritogenesis by mediating the Rap1/B-Raf/ERK signaling through a pathway that is independent on both PKA and RAPGEF3/RAPGEF4. Involved in neuron migration and in the formation of the major forebrain fiber connections forming the corpus callosum, the anterior commissure and the hippocampal commissure during brain development. Involved in neuronal growth factor (NGF)-induced sustained activation of Rap1 at late endosomes and in brain-derived neurotrophic factor (BDNF)-induced axon outgrowth of hippocampal neurons. Plays a role in the regulation of embryonic blood vessel formation and in the establishment of basal junction integrity and endothelial barrier function. May be involved in the regulation of the vascular endothelial growth factor receptor KDR and cadherin CDH5 expression at allantois endothelial cell-cell junctions. Binds to cAMP. In Bos taurus (Bovine), this protein is Rap guanine nucleotide exchange factor 2 (RAPGEF2).